Consider the following 625-residue polypeptide: DNA mismatch repair protein MutL (625 aa).

Belongs to the DNA mismatch repair MutL/HexB family.

This protein is involved in the repair of mismatches in DNA. It is required for dam-dependent methyl-directed DNA mismatch repair. May act as a 'molecular matchmaker', a protein that promotes the formation of a stable complex between two or more DNA-binding proteins in an ATP-dependent manner without itself being part of a final effector complex. In Bacteroides fragilis (strain YCH46), this protein is DNA mismatch repair protein MutL.